The chain runs to 588 residues: Probable basic-leucine zipper transcription factor M (588 aa).

The stretch at 127 to 157 (QVEQQQEQEQEQEQQQKQQQQQYIEKQIQEI) forms a coiled coil. Positions 221 to 240 (QQNHIDNQSLNNSNTKTSKN) are enriched in low complexity. Residues 221-250 (QQNHIDNQSLNNSNTKTSKNQQKDNNLPKK) form a disordered region. One can recognise a bZIP domain in the interval 263 to 326 (NNNNIEKKRD…GSNLMRPEPE (64 aa)). Residues 269 to 289 (KKRDQTESSKNFREKKKEYVK) are basic motif. The segment at 291 to 312 (IESKILALTLENDKLKKENDSL) is leucine-zipper.

This sequence belongs to the bZIP family.

It localises to the nucleus. Functionally, probable transcriptional regulator. The chain is Probable basic-leucine zipper transcription factor M (bzpM) from Dictyostelium discoideum (Social amoeba).